Here is a 177-residue protein sequence, read N- to C-terminus: Bifunctional protein PyrR (177 aa).

Residues 97–109 (IILVDDVLYTGRT) carry the PRPP-binding motif.

This sequence belongs to the purine/pyrimidine phosphoribosyltransferase family. PyrR subfamily.

The enzyme catalyses UMP + diphosphate = 5-phospho-alpha-D-ribose 1-diphosphate + uracil. Functionally, regulates the transcription of the pyrimidine nucleotide (pyr) operon in response to exogenous pyrimidines. Its function is as follows. Also displays a weak uracil phosphoribosyltransferase activity which is not physiologically significant. This Nitrosococcus oceani (strain ATCC 19707 / BCRC 17464 / JCM 30415 / NCIMB 11848 / C-107) protein is Bifunctional protein PyrR.